Here is a 503-residue protein sequence, read N- to C-terminus: Aminoaldehyde dehydrogenase 1, peroxisomal (503 aa).

Na(+) contacts are provided by isoleucine 28, aspartate 99, and leucine 189. Glycine 238–lysine 245 serves as a coordination point for NAD(+). The active-site Proton acceptor is the glutamate 260. The NAD(+) site is built by cysteine 294 and glutamate 393. Residue cysteine 294 is the Nucleophile of the active site.

Belongs to the aldehyde dehydrogenase family. As to expression, expressed in leaves, flowers and fruits.

It localises to the cytoplasm. The protein localises to the cytosol. It carries out the reaction 4-aminobutanal + NAD(+) + H2O = 4-aminobutanoate + NADH + 2 H(+). The catalysed reaction is 3-aminopropanal + NAD(+) + H2O = beta-alanine + NADH + 2 H(+). Its pathway is amine and polyamine biosynthesis; betaine biosynthesis via choline pathway; betaine from betaine aldehyde: step 1/1. In terms of biological role, dehydrogenase that catalyzes the oxidation of several aminoaldehydes. Metabolizes and detoxifies aldehyde products of polyamine degradation to non-toxic amino acids. Catalyzes the oxidation of 4-aminobutanal and 3-aminopropanal to 4-aminobutanoate and beta-alanine, respectively. This is Aminoaldehyde dehydrogenase 1, peroxisomal from Malus domestica (Apple).